A 528-amino-acid chain; its full sequence is MWRRQHALLRRISLPKPPAATGIGCYYATEPEGRKPKTAPLQSRGMVDRFRLRAKGGDGGNGCISLRRSRSDRQGKPDGGNGGRGGDVILECSRSVWDFSGLQHHMKASRGANGVSKNQIGTRGSDKIAQVPVGTVIHLVEGEQPSLSVNKPTRALDPWDIPDAVEHSPFSSSRIGSKMMKGLDSSRSSQHISSKKNTAENDCERGNRNHRGKEPYYMTEFVRTEDYDGTSYPHQVGVDENDQFDDEDDEFWEDDEEELDMEEVTEEKEEEEDVRYSVAEMTKPGQRLIIARGGEGGLGNACILKEMWLSKAHKEEEMASLSTGHPGTETYLILELKSIADVGLVGMPNAGKSTLLSALSRARPEIADYAFTTLRPNIGSLTYEDYFSVKVADIPGLIKGAHENRGLGHAFLRHIERTKVLAYVLDLAATLNGRKGVPPWEQLRDLVVELEHYQEGLTKRPSLIVANKIDEEGADEMYEELKKRVQGVPMFPICAILQEGVPDLRVGLRDLMDASDPQGIELSKIVVD.

The transit peptide at 1–45 (MWRRQHALLRRISLPKPPAATGIGCYYATEPEGRKPKTAPLQSRG) directs the protein to the mitochondrion. In terms of domain architecture, Obg spans 46 to 339 (MVDRFRLRAK…TYLILELKSI (294 aa)). 2 disordered regions span residues 52-87 (LRAK…RGGD) and 167-212 (HSPF…NHRG). Gly residues predominate over residues 77-86 (PDGGNGGRGG). Over residues 197–207 (NTAENDCERGN) the composition is skewed to basic and acidic residues. The OBG-type G domain occupies 340–513 (ADVGLVGMPN…LRVGLRDLMD (174 aa)). GTP contacts are provided by residues 346 to 353 (GMPNAGKS) and 393 to 397 (DIPGL).

This sequence belongs to the TRAFAC class OBG-HflX-like GTPase superfamily. OBG GTPase family.

It localises to the mitochondrion. Its function is as follows. May bind GTP and have GTPase activity. This Oryza sativa subsp. japonica (Rice) protein is Probable GTP-binding protein OBGM, mitochondrial (OBGM).